A 370-amino-acid chain; its full sequence is 3-isopropylmalate dehydrogenase (370 aa).

77 to 90 lines the NAD(+) pocket; sequence GPKWDGVPYEHRPE. Substrate contacts are provided by arginine 97, arginine 107, arginine 135, and aspartate 226. 3 residues coordinate Mg(2+): aspartate 226, aspartate 250, and aspartate 254. 290 to 302 lines the NAD(+) pocket; that stretch reads GSAPDIAGKSIAN.

This sequence belongs to the isocitrate and isopropylmalate dehydrogenases family. LeuB type 1 subfamily. Homodimer. Mg(2+) serves as cofactor. Mn(2+) is required as a cofactor.

It is found in the cytoplasm. The catalysed reaction is (2R,3S)-3-isopropylmalate + NAD(+) = 4-methyl-2-oxopentanoate + CO2 + NADH. It functions in the pathway amino-acid biosynthesis; L-leucine biosynthesis; L-leucine from 3-methyl-2-oxobutanoate: step 3/4. Functionally, catalyzes the oxidation of 3-carboxy-2-hydroxy-4-methylpentanoate (3-isopropylmalate) to 3-carboxy-4-methyl-2-oxopentanoate. The product decarboxylates to 4-methyl-2 oxopentanoate. In Agrobacterium fabrum (strain C58 / ATCC 33970) (Agrobacterium tumefaciens (strain C58)), this protein is 3-isopropylmalate dehydrogenase (leuB).